Here is a 311-residue protein sequence, read N- to C-terminus: Delta(1)-pyrroline-2-carboxylate/Delta(1)-piperideine-2-carboxylate reductase (311 aa).

The protein belongs to the ornithine cyclodeaminase/mu-crystallin family. Homodimer.

It carries out the reaction L-pipecolate + NAD(+) = Delta(1)-piperideine-2-carboxylate + NADH + H(+). The enzyme catalyses L-pipecolate + NADP(+) = Delta(1)-piperideine-2-carboxylate + NADPH + H(+). The catalysed reaction is L-proline + NAD(+) = 1-pyrroline-2-carboxylate + NADH + H(+). It catalyses the reaction L-proline + NADP(+) = 1-pyrroline-2-carboxylate + NADPH + H(+). It functions in the pathway amino-acid degradation. Catalyzes the reduction of both Delta(1)-pyrroline-2-carboxylate (Pyr2C) and Delta(1)-piperideine-2-carboxylate (Pip2C) to L-proline and L-pipecolate, respectively, using NADPH or NADH as the electron donor. Can also catalyze the reverse oxidation reactions, albeit at a much lower rate. Together with LhpH, is involved in a trans-3-hydroxy-L-proline (t3LHyp) degradation pathway to L-proline, which allows A.brasilense to grow on t3LHyp as a sole carbon source. Also appears to be involved in D-proline and D-lysine metabolism. Does not show ornithine cyclodeaminase (OCD) activity. This is Delta(1)-pyrroline-2-carboxylate/Delta(1)-piperideine-2-carboxylate reductase from Azospirillum brasilense.